Reading from the N-terminus, the 159-residue chain is MSHHDERTFVMVKPDGVQRGLIGEIVSRFEERGLKLVGGKFMQIDEDLAHQHYGEHEGKPFFDGLVDFITSAPVFAMVWEGADATRQVRSMVGETDPAESAPGTIRGDFGLDLGQNVIHASDHEDEGANEREIDLFFDEEELVDYGLDTAAWVYEDEQH.

Residues K13, F61, R89, T95, R106, and N116 each coordinate ATP. The active-site Pros-phosphohistidine intermediate is H119.

The protein belongs to the NDK family. It depends on Mg(2+) as a cofactor.

It localises to the cytoplasm. It carries out the reaction a 2'-deoxyribonucleoside 5'-diphosphate + ATP = a 2'-deoxyribonucleoside 5'-triphosphate + ADP. The enzyme catalyses a ribonucleoside 5'-diphosphate + ATP = a ribonucleoside 5'-triphosphate + ADP. In terms of biological role, major role in the synthesis of nucleoside triphosphates other than ATP. The ATP gamma phosphate is transferred to the NDP beta phosphate via a ping-pong mechanism, using a phosphorylated active-site intermediate. This is Nucleoside diphosphate kinase from Halorubrum lacusprofundi (strain ATCC 49239 / DSM 5036 / JCM 8891 / ACAM 34).